Consider the following 286-residue polypeptide: DNA-directed RNA polymerase subunit Rpo3 (286 aa).

The protein belongs to the archaeal Rpo3/eukaryotic RPB3 RNA polymerase subunit family. In terms of assembly, part of the RNA polymerase complex.

It localises to the cytoplasm. The catalysed reaction is RNA(n) + a ribonucleoside 5'-triphosphate = RNA(n+1) + diphosphate. Functionally, DNA-dependent RNA polymerase (RNAP) catalyzes the transcription of DNA into RNA using the four ribonucleoside triphosphates as substrates. The protein is DNA-directed RNA polymerase subunit Rpo3 of Aeropyrum pernix (strain ATCC 700893 / DSM 11879 / JCM 9820 / NBRC 100138 / K1).